The primary structure comprises 384 residues: Carbamoyl phosphate synthase small chain (384 aa).

Positions 1–192 (MPIAAAKPAL…FGPVAEQQGQ (192 aa)) are CPSase. Residues serine 51, glycine 244, and glycine 246 each coordinate L-glutamine. Positions 196-381 (TVVALDFGVK…VKLMRQQKAE (186 aa)) constitute a Glutamine amidotransferase type-1 domain. Cysteine 272 functions as the Nucleophile in the catalytic mechanism. L-glutamine-binding residues include methionine 273, glutamine 276, asparagine 312, glycine 314, and phenylalanine 315. Active-site residues include histidine 354 and glutamate 356.

It belongs to the CarA family. As to quaternary structure, composed of two chains; the small (or glutamine) chain promotes the hydrolysis of glutamine to ammonia, which is used by the large (or ammonia) chain to synthesize carbamoyl phosphate. Tetramer of heterodimers (alpha,beta)4.

The catalysed reaction is hydrogencarbonate + L-glutamine + 2 ATP + H2O = carbamoyl phosphate + L-glutamate + 2 ADP + phosphate + 2 H(+). It catalyses the reaction L-glutamine + H2O = L-glutamate + NH4(+). The protein operates within amino-acid biosynthesis; L-arginine biosynthesis; carbamoyl phosphate from bicarbonate: step 1/1. It participates in pyrimidine metabolism; UMP biosynthesis via de novo pathway; (S)-dihydroorotate from bicarbonate: step 1/3. Small subunit of the glutamine-dependent carbamoyl phosphate synthetase (CPSase). CPSase catalyzes the formation of carbamoyl phosphate from the ammonia moiety of glutamine, carbonate, and phosphate donated by ATP, constituting the first step of 2 biosynthetic pathways, one leading to arginine and/or urea and the other to pyrimidine nucleotides. The small subunit (glutamine amidotransferase) binds and cleaves glutamine to supply the large subunit with the substrate ammonia. This is Carbamoyl phosphate synthase small chain from Synechocystis sp. (strain ATCC 27184 / PCC 6803 / Kazusa).